Here is a 955-residue protein sequence, read N- to C-terminus: Anion exchange protein 4 (955 aa).

3 disordered regions span residues 20–50 (VGQL…PEDP), 154–190 (HTQT…PLRQ), and 331–352 (PHRT…PELQ). The next 4 membrane-spanning stretches (helical) occupy residues 387–407 (AVLY…GLLG), 415–435 (GVLE…LMAG), 472–492 (VGIW…SVLV), and 503–523 (FCAL…LNLA). The tract at residues 387 to 955 (AVLYIYLATV…KAPEINISVN (569 aa)) is membrane (anion exchange). 2 N-linked (GlcNAc...) asparagine glycosylation sites follow: Asn-548 and Asn-572. 7 consecutive transmembrane segments (helical) span residues 596–616 (VPDI…FAIA), 637–657 (FSSI…GLAM), 684–704 (PWWL…LIFM), 730–750 (LFCV…WYVS), 785–804 (LTGL…APVL), 811–830 (VLYG…IQFM), and 871–891 (LWII…LGLV). Residues 918 to 955 (RNVPEKGLEPGHSFSGSDSEDSELMYQPKAPEINISVN) form a disordered region. A glycan (N-linked (GlcNAc...) asparagine) is linked at Asn-951.

It belongs to the anion exchanger (TC 2.A.31) family. Highly expressed in kidney. Expressed in the outer medulla and the inner medulla in the kidney cortex. Only expressed in beta-intercalated cells.

The protein resides in the lateral cell membrane. It is found in the apical cell membrane. It localises to the basolateral cell membrane. The enzyme catalyses 2 hydrogencarbonate(out) + chloride(in) + Na(+)(out) = 2 hydrogencarbonate(in) + chloride(out) + Na(+)(in). It catalyses the reaction K(+)(in) + 2 hydrogencarbonate(in) + chloride(out) = K(+)(out) + 2 hydrogencarbonate(out) + chloride(in). The catalysed reaction is Li(+)(in) + 2 hydrogencarbonate(in) + chloride(out) = Li(+)(out) + 2 hydrogencarbonate(out) + chloride(in). It carries out the reaction Rb(+)(in) + 2 hydrogencarbonate(in) + chloride(out) = Rb(+)(out) + 2 hydrogencarbonate(out) + chloride(in). The enzyme catalyses Cs(+)(in) + 2 hydrogencarbonate(in) + chloride(out) = Cs(+)(out) + 2 hydrogencarbonate(out) + chloride(in). Its function is as follows. Electroneutral Cl(-)/HCO3(-) antiporter that favors chloride ion entry and efflux of hydrogencarbonate and sodium ion across the basolateral membrane and may participat in salivary secretion. Also mediates Cl(-)/HCO3(-) exchange activity in the presence of K(+) as well as Cs(+), Li(+), and Rb(+). Does not contribute to Cl(-)/HCO3(-) exchanger in the apical membrane of the upper villous epithelium. This chain is Anion exchange protein 4, found in Oryctolagus cuniculus (Rabbit).